A 1218-amino-acid chain; its full sequence is ATP-dependent helicase/deoxyribonuclease subunit B (1218 aa).

In terms of domain architecture, UvrD-like helicase ATP-binding spans 1–279 (MRFIVGRAGT…VFLTETHRFE (279 aa)). An ATP-binding site is contributed by 6-13 (GRAGTGKS). One can recognise a UvrD-like helicase C-terminal domain in the interval 281-588 (AGLKHLERFY…LVGSLDRSRN (308 aa)). Residue cysteine 786 coordinates [4Fe-4S] cluster. The tract at residues 987-1006 (LAEGSKGSEGSEGSEDSEDS) is disordered. [4Fe-4S] cluster contacts are provided by cysteine 1126, cysteine 1129, and cysteine 1135. Residues 1160–1169 (RVQSQDSEQY) are compositionally biased toward polar residues. A disordered region spans residues 1160–1218 (RVQSQDSEQYPEQHPPTSVPGETSRRALQKDGGNSPRGQELIWLGEDEAGAGKEDDGHE). Over residues 1209 to 1218 (GAGKEDDGHE) the composition is skewed to basic and acidic residues.

Belongs to the helicase family. AddB/RexB type 1 subfamily. In terms of assembly, heterodimer of AddA and AddB. Mg(2+) serves as cofactor. Requires [4Fe-4S] cluster as cofactor.

In terms of biological role, the heterodimer acts as both an ATP-dependent DNA helicase and an ATP-dependent, dual-direction single-stranded exonuclease. Recognizes the chi site generating a DNA molecule suitable for the initiation of homologous recombination. The AddB subunit has 5' -&gt; 3' nuclease activity but not helicase activity. This Desulfitobacterium hafniense (strain DSM 10664 / DCB-2) protein is ATP-dependent helicase/deoxyribonuclease subunit B.